The chain runs to 397 residues: Plasma membrane iron permease (397 aa).

The next 4 membrane-spanning stretches (helical) occupy residues 61-81, 92-112, 177-197, and 292-312; these read FTAL…FYAL, IWEG…GFAM, AFPL…YFIY, and GSIL…FLMW. 2 positions are modified to phosphoserine: Ser337 and Ser338. Positions 337-346 are enriched in polar residues; the sequence is SSHTPVQSSS. Residues 337–364 are disordered; the sequence is SSHTPVQSSSSEDEFKINSPTDDKGDKA. Residue Thr340 is modified to Phosphothreonine. A phosphoserine mark is found at Ser346, Ser347, and Ser355. A compositionally biased stretch (basic and acidic residues) spans 349-364; the sequence is DEFKINSPTDDKGDKA. The residue at position 357 (Thr357) is a Phosphothreonine. Phosphoserine occurs at positions 374, 375, and 376.

Belongs to the oxidase-dependent Fe transporter (OFeT) (TC 9.A.10.1) family.

It is found in the membrane. In terms of biological role, permease for high affinity iron uptake. In Schizosaccharomyces pombe (strain 972 / ATCC 24843) (Fission yeast), this protein is Plasma membrane iron permease (fip1).